The sequence spans 299 residues: Coenzyme PQQ synthesis protein B (299 aa).

This sequence belongs to the PqqB family.

It functions in the pathway cofactor biosynthesis; pyrroloquinoline quinone biosynthesis. Its function is as follows. May be involved in the transport of PQQ or its precursor to the periplasm. The polypeptide is Coenzyme PQQ synthesis protein B (Xanthomonas oryzae pv. oryzae (strain MAFF 311018)).